Consider the following 80-residue polypeptide: Protein UL148A (80 aa).

Residues 10-30 (WIPVCVVVVMTSVVLFAGLHV) form a helical membrane-spanning segment.

The protein localises to the host membrane. Its function is as follows. Plays a role in the down-regulation of the host NKG2D ligand MICA by utilizing the lysosomal pathway for its degradation. In turn, MICA reduction diminishes NK-cell killing of HCMV-infected cells. In Human cytomegalovirus (strain Merlin) (HHV-5), this protein is Protein UL148A (UL148A).